A 225-amino-acid chain; its full sequence is Reticulon-like protein B9 (225 aa).

A Reticulon domain is found at Val39–Phe224. The next 3 membrane-spanning stretches (helical) occupy residues Ile50 to Tyr70, Phe72 to Thr92, and Tyr152 to Val172.

Its subcellular location is the endoplasmic reticulum membrane. The chain is Reticulon-like protein B9 (RTNLB9) from Arabidopsis thaliana (Mouse-ear cress).